The following is a 1372-amino-acid chain: Serine protease pic autotransporter (1372 aa).

An N-terminal signal peptide occupies residues 1–55 (MNKVYSLKYCPVTGGLIAVSELARRVIKKTCRRLTHILLAGIPAICLCYSQISQA). Positions 56-301 (GIVRSDIAYQ…NVIPTDYLNQ (246 aa)) constitute a Peptidase S6 domain. Residues His127, Asp155, and Ser258 each act as charge relay system in the active site. Residues 1106–1372 (DTNGDAGAWA…AVNANFRYMF (267 aa)) form the Autotransporter domain.

In terms of processing, cleaved to release the mature protein from the outer membrane.

It is found in the periplasm. It localises to the secreted. The protein localises to the cell surface. Its subcellular location is the cell outer membrane. Involved in intestinal colonization, displays in vitro mucinolytic activity, serum resistance, and hemagglutination. Important to penetrate the intestinal mucus layer. The polypeptide is Serine protease pic autotransporter (pic) (Escherichia coli O44:H18 (strain 042 / EAEC)).